A 462-amino-acid chain; its full sequence is Fez family zinc finger protein 1 (462 aa).

An Engrailed homology 1 repressor motif is present at residues 34 to 49; sequence PLAFSIERIMSRTPEP. 6 C2H2-type zinc fingers span residues 260–282, 288–310, 316–338, 344–366, 372–394, and 400–423; these read FTCE…MPVH, FVCK…KIIH, HKCN…TRIH, FVCE…KLTH, FKCN…MHTH, and FTCP…RKLH. Residues 441 to 462 form a disordered region; that stretch reads LLLPNREPSPTIQSPQLQKSGY. The span at 448–462 shows a compositional bias: polar residues; sequence PSPTIQSPQLQKSGY.

This sequence belongs to the krueppel C2H2-type zinc-finger protein family.

It localises to the nucleus. In terms of biological role, transcription repressor. Involved in the development of the forebrain region. The polypeptide is Fez family zinc finger protein 1 (fezf1) (Xenopus tropicalis (Western clawed frog)).